Reading from the N-terminus, the 184-residue chain is Large ribosomal subunit protein uL5c (184 aa).

It belongs to the universal ribosomal protein uL5 family. Part of the 50S ribosomal subunit; contacts the 5S rRNA.

It is found in the plastid. The protein resides in the chloroplast. Functionally, binds 5S rRNA, forms part of the central protuberance of the 50S subunit. The chain is Large ribosomal subunit protein uL5c (rpl5) from Ostreococcus tauri.